The primary structure comprises 318 residues: L-lactate dehydrogenase (318 aa).

NAD(+) contacts are provided by residues V18, D39, K44, Y69, and 83–84 (GA). 2 residues coordinate substrate: Q86 and R92. NAD(+)-binding positions include S105, 122–124 (VSN), and S147. Substrate is bound at residue 124–127 (NPVD). 152-155 (DTSR) lines the substrate pocket. The active-site Proton acceptor is H179. Residue Y225 is modified to Phosphotyrosine. A substrate-binding site is contributed by T234.

It belongs to the LDH/MDH superfamily. LDH family. In terms of assembly, homotetramer.

The protein localises to the cytoplasm. It carries out the reaction (S)-lactate + NAD(+) = pyruvate + NADH + H(+). The protein operates within fermentation; pyruvate fermentation to lactate; (S)-lactate from pyruvate: step 1/1. Its function is as follows. Catalyzes the conversion of lactate to pyruvate. The polypeptide is L-lactate dehydrogenase (Clostridium botulinum (strain Kyoto / Type A2)).